We begin with the raw amino-acid sequence, 1516 residues long: AP-4 complex accessory subunit RUSC2 (1516 aa).

Disordered regions lie at residues 33–105, 202–224, 229–248, 331–351, 404–445, and 478–511; these read AGGG…PFLL, LDEC…SGFS, WKLS…SGDQ, SKMS…GYGC, LSSQ…PSEY, and GQVY…PVRL. Over residues 66 to 81 the composition is skewed to polar residues; the sequence is LFSSLHSTPGGTARSI. Over residues 82–92 the composition is skewed to basic and acidic residues; it reads DSTKSRSRDGR. Residues 206–217 are compositionally biased toward gly residues; that stretch reads GGPGGSGSGGGA. Over residues 333–344 the composition is skewed to basic and acidic residues; the sequence is MSYESHHPESGG. Residues 405–420 show a composition bias toward low complexity; it reads SSQSSPSPAGSSITSC. Positions 428–440 are enriched in pro residues; it reads SPPPGPGPDPGPS. Over residues 480 to 493 the composition is skewed to polar residues; the sequence is VYTNTSPPNLSTGR. Ser-536, Ser-543, and Ser-559 each carry phosphoserine. Disordered stretches follow at residues 550-588, 646-688, 727-836, and 868-889; these read GRKK…APLD, LMDP…KEQR, RTQQ…PQKE, and ESLA…ANHL. Residues 567–579 show a composition bias toward polar residues; it reads GDSSQEFSPIQEA. Residue Ser-656 is modified to Phosphoserine. Residues 729–746 are compositionally biased toward low complexity; that stretch reads QQPAPLAAPAAQVSVPAP. Position 781 is a phosphoserine (Ser-781). The segment covering 791–801 has biased composition (low complexity); sequence PSTDSSASTSC. The 145-residue stretch at 1031–1175 folds into the RUN domain; that stretch reads NVGHLVLKYL…LPFSLDLLFQ (145 aa). Disordered stretches follow at residues 1210 to 1261, 1286 to 1408, and 1422 to 1449; these read RARG…GRAR, IEGS…LPSD, and QTVG…SSPP. The span at 1219–1230 shows a compositional bias: basic and acidic residues; sequence DVDRAAQGERVK. Over residues 1237 to 1251 the composition is skewed to acidic residues; it reads GGEEEEEEEETEEVA. A compositionally biased stretch (basic and acidic residues) spans 1355-1364; that stretch reads ELRRSREREG. 2 positions are modified to phosphoserine: Ser-1368 and Ser-1380. A compositionally biased stretch (basic and acidic residues) spans 1426-1437; that stretch reads SRREPEPKESLQ. An SH3 domain is found at 1447–1506; that stretch reads SPPCEVQALCHHLATGPGQLSFHKGDILRVLGRAGGDWLRCSRGPDSGLVPLAYVTLTPT.

In terms of assembly, associated component of the adapter-like complex 4 (AP-4). Interacts with active RAB1A and RAB1B, and with GOLGA2. Interacts (via RUN domain) with RAB35 (GTP-bound form); the interaction recruits RUSC2 to the plasma membrane. As to expression, widely expressed, with highest levels in brain and testis.

It localises to the cytoplasm. It is found in the cytosol. The protein localises to the cell membrane. Functionally, associates with the adapter-like complex 4 (AP-4) and may therefore play a role in vesicular trafficking of proteins at the trans-Golgi network. The sequence is that of AP-4 complex accessory subunit RUSC2 from Homo sapiens (Human).